The chain runs to 774 residues: Ras and Rab interactor 1 (774 aa).

The residue at position 1 (M1) is an N-acetylmethionine. A disordered region spans residues 1-52 (MEDPGETEAHPLGATSLNFVPGYQQEEKPSPDPLYDTPDARGVQAGGSQQPA). Phosphoserine is present on S16. Position 35 is a phosphotyrosine; by ABL1 and ABL2 (Y35). Residues 68–162 (WLQLRANAAA…ILLLPLPLPR (95 aa)) form the SH2 domain. Disordered regions lie at residues 188 to 211 (LNTK…RSPQ) and 249 to 342 (STET…RPRH). Residues S209, S257, S330, and S334 each carry the phosphoserine modification. Over residues 256–268 (LSPPAVPPPPVPV) the composition is skewed to pro residues. The segment covering 327–337 (SSGSPTTSPRL) has biased composition (low complexity). S351 carries the post-translational modification Phosphoserine; by PKD/PRKD1. Residues 456–598 (LSTDGSLGRL…LSGLSQAHAL (143 aa)) enclose the VPS9 domain. Residue S609 is modified to Phosphoserine. Residues 624–706 (FQHLLRVAYQ…GYLIYRRAER (83 aa)) enclose the Ras-associating domain. Position 692 is an omega-N-methylarginine (R692). Positions 704 to 766 (AERPETQRAA…GHMQLEEQKA (63 aa)) are enriched in basic and acidic residues. A disordered region spans residues 704 to 774 (AERPETQRAA…KAEGCPALEE (71 aa)).

It belongs to the RIN (Ras interaction/interference) family. As to quaternary structure, interacts with the GTP-bound form of Ras proteins (NRAS, HRAS and KRAS). This interaction prevents the association between RAF1 and Ras. Interacts with 14-3-3 proteins YWHAB, YWHAE and YWHAZ when phosphorylated on Ser-351. Interacts with the SH3 domain of ABL1 and ABL2. Interacts with RAB5A. The interaction with Ras is probably regulated and antagonized by the interaction with 14-3-3 proteins. The interaction with 14-3-3 proteins is regulated by phosphorylation on Ser-351. Post-translationally, phosphorylated on tyrosine residues by ABL1 and ABL2. Phosphorylation at Ser-351 by PRKD1 induces interaction with 14-3-3 proteins.

Its subcellular location is the cytoplasm. It localises to the membrane. The protein resides in the cytoskeleton. Ras effector protein, which may serve as an inhibitory modulator of neuronal plasticity in aversive memory formation. Can affect Ras signaling at different levels. First, by competing with RAF1 protein for binding to activated Ras. Second, by enhancing signaling from ABL1 and ABL2, which regulate cytoskeletal remodeling. Third, by activating RAB5A, possibly by functioning as a guanine nucleotide exchange factor (GEF) for RAB5A, by exchanging bound GDP for free GTP, and facilitating Ras-activated receptor endocytosis. The protein is Ras and Rab interactor 1 (Rin1) of Rattus norvegicus (Rat).